Consider the following 53-residue polypeptide: UPF0391 membrane protein TM1040_2720 (53 aa).

A run of 2 helical transmembrane segments spans residues 4–24 (WALAFLVIALIAAVFGFGGIA) and 29–48 (GIAQILFFIFLVMFVVALIL).

This sequence belongs to the UPF0391 family.

It localises to the cell membrane. The chain is UPF0391 membrane protein TM1040_2720 from Ruegeria sp. (strain TM1040) (Silicibacter sp.).